Here is a 165-residue protein sequence, read N- to C-terminus: Bark lectin isoform 2 (165 aa).

N-linked (GlcNAc...) asparagine glycosylation is found at Asn27 and Asn57. 2 cysteine pairs are disulfide-bonded: Cys33–Cys80 and Cys126–Cys133.

It belongs to the protease inhibitor I3 (leguminous Kunitz-type inhibitor) family. Dimer.

In terms of biological role, glucose and N-acetylglucosamine binding lectin. Has hemagglutinating activity against human and rabbit erythrocytes which does not require divalent cations. Inhibits factor Xa and, to a lesser extent, trypsin. Does not inhibit neutrophil elastase, human plasma kallikrein, papain, human plasmin, porcine pancreatic kallikrein and bovin chymotrypsin. Has insecticidal activity against the termite species N.corniger. Induces apoptosis in prostrate cancer cell lines DU145 and PC3. The chain is Bark lectin isoform 2 from Crateva tapia (Garlic-pear tree).